Consider the following 273-residue polypeptide: Ribosomal RNA small subunit methyltransferase A (273 aa).

Residues asparagine 18, leucine 20, glycine 45, glutamate 66, aspartate 91, and asparagine 113 each coordinate S-adenosyl-L-methionine.

This sequence belongs to the class I-like SAM-binding methyltransferase superfamily. rRNA adenine N(6)-methyltransferase family. RsmA subfamily.

The protein resides in the cytoplasm. The enzyme catalyses adenosine(1518)/adenosine(1519) in 16S rRNA + 4 S-adenosyl-L-methionine = N(6)-dimethyladenosine(1518)/N(6)-dimethyladenosine(1519) in 16S rRNA + 4 S-adenosyl-L-homocysteine + 4 H(+). Specifically dimethylates two adjacent adenosines (A1518 and A1519) in the loop of a conserved hairpin near the 3'-end of 16S rRNA in the 30S particle. May play a critical role in biogenesis of 30S subunits. This Enterobacter sp. (strain 638) protein is Ribosomal RNA small subunit methyltransferase A.